The chain runs to 366 residues: Neutral protease 2 homolog MGYG_04094 (366 aa).

An N-terminal signal peptide occupies residues 1–19 (MQILAALSAIGALVATATA). Residues 20-188 (AAVPNAPAKQ…NKSRSTIDKR (169 aa)) constitute a propeptide that is removed on maturation. 2 cysteine pairs are disulfide-bonded: cysteine 196–cysteine 267 and cysteine 274–cysteine 292. Histidine 317 contacts Zn(2+). The active site involves glutamate 318. Residues histidine 321 and aspartate 332 each contribute to the Zn(2+) site.

It belongs to the peptidase M35 family. Zn(2+) is required as a cofactor.

Its subcellular location is the secreted. The catalysed reaction is Preferential cleavage of bonds with hydrophobic residues in P1'. Also 3-Asn-|-Gln-4 and 8-Gly-|-Ser-9 bonds in insulin B chain.. Its function is as follows. Secreted metalloproteinase that allows assimilation of proteinaceous substrates. Shows high activities on basic nuclear substrates such as histone and protamine. May be involved in virulence. The polypeptide is Neutral protease 2 homolog MGYG_04094 (Arthroderma gypseum (strain ATCC MYA-4604 / CBS 118893) (Microsporum gypseum)).